We begin with the raw amino-acid sequence, 74 residues long: Small cysteine-rich protein 8 (74 aa).

Residues 1–21 (MAAKFHLCLLLIILGTITVQG) form the signal peptide. A propeptide spanning residues 22–31 (ARHPGKPHFF) is cleaved from the precursor.

This sequence belongs to the Cnidaria small cysteine-rich protein (SCRiP) family. beta subfamily. Contains 4 disulfide bonds.

It is found in the secreted. The protein resides in the nematocyst. Functionally, induces neurotoxic symptoms on zebrafish. Has also been claimed to be implied in calcification, but tests on homolog proteins suggest that proteins of this family have a neurotoxic function and not a calcification function. The sequence is that of Small cysteine-rich protein 8 from Orbicella faveolata (Mountainous star coral).